A 321-amino-acid polypeptide reads, in one-letter code: tRNA U34 carboxymethyltransferase (321 aa).

Residues K90, W104, K109, G129, 151 to 153 (DPT), 180 to 181 (IE), M195, Y199, and R314 contribute to the carboxy-S-adenosyl-L-methionine site.

Belongs to the class I-like SAM-binding methyltransferase superfamily. CmoB family. In terms of assembly, homotetramer.

It catalyses the reaction carboxy-S-adenosyl-L-methionine + 5-hydroxyuridine(34) in tRNA = 5-carboxymethoxyuridine(34) in tRNA + S-adenosyl-L-homocysteine + H(+). Catalyzes carboxymethyl transfer from carboxy-S-adenosyl-L-methionine (Cx-SAM) to 5-hydroxyuridine (ho5U) to form 5-carboxymethoxyuridine (cmo5U) at position 34 in tRNAs. This Pasteurella multocida (strain Pm70) protein is tRNA U34 carboxymethyltransferase.